Reading from the N-terminus, the 235-residue chain is Phosphoribosylformylglycinamidine synthase subunit PurQ (235 aa).

The Glutamine amidotransferase type-1 domain occupies 4 to 234; sequence GILVFPGTNC…VQHLTGRVIR (231 aa). Catalysis depends on Cys-86, which acts as the Nucleophile. Catalysis depends on residues His-203 and Glu-205.

Part of the FGAM synthase complex composed of 1 PurL, 1 PurQ and 2 PurS subunits.

The protein resides in the cytoplasm. The catalysed reaction is N(2)-formyl-N(1)-(5-phospho-beta-D-ribosyl)glycinamide + L-glutamine + ATP + H2O = 2-formamido-N(1)-(5-O-phospho-beta-D-ribosyl)acetamidine + L-glutamate + ADP + phosphate + H(+). The enzyme catalyses L-glutamine + H2O = L-glutamate + NH4(+). It functions in the pathway purine metabolism; IMP biosynthesis via de novo pathway; 5-amino-1-(5-phospho-D-ribosyl)imidazole from N(2)-formyl-N(1)-(5-phospho-D-ribosyl)glycinamide: step 1/2. In terms of biological role, part of the phosphoribosylformylglycinamidine synthase complex involved in the purines biosynthetic pathway. Catalyzes the ATP-dependent conversion of formylglycinamide ribonucleotide (FGAR) and glutamine to yield formylglycinamidine ribonucleotide (FGAM) and glutamate. The FGAM synthase complex is composed of three subunits. PurQ produces an ammonia molecule by converting glutamine to glutamate. PurL transfers the ammonia molecule to FGAR to form FGAM in an ATP-dependent manner. PurS interacts with PurQ and PurL and is thought to assist in the transfer of the ammonia molecule from PurQ to PurL. The protein is Phosphoribosylformylglycinamidine synthase subunit PurQ of Symbiobacterium thermophilum (strain DSM 24528 / JCM 14929 / IAM 14863 / T).